The primary structure comprises 205 residues: Probable GTP-binding protein EngB (205 aa).

The 175-residue stretch at 29–203 (QGAEIAFIGR…KAVLSQWFSS (175 aa)) folds into the EngB-type G domain. Residues 37-44 (GRSNAGKS), 64-68 (GRTQM), 82-85 (DLPG), 149-152 (TKSD), and 182-184 (FSS) contribute to the GTP site. 2 residues coordinate Mg(2+): Ser44 and Thr66.

The protein belongs to the TRAFAC class TrmE-Era-EngA-EngB-Septin-like GTPase superfamily. EngB GTPase family. Mg(2+) serves as cofactor.

Functionally, necessary for normal cell division and for the maintenance of normal septation. This is Probable GTP-binding protein EngB from Coxiella burnetii (strain CbuK_Q154) (Coxiella burnetii (strain Q154)).